The following is a 161-amino-acid chain: Protein-export protein SecB (161 aa).

This sequence belongs to the SecB family. As to quaternary structure, homotetramer, a dimer of dimers. One homotetramer interacts with 1 SecA dimer.

It is found in the cytoplasm. Its function is as follows. One of the proteins required for the normal export of preproteins out of the cell cytoplasm. It is a molecular chaperone that binds to a subset of precursor proteins, maintaining them in a translocation-competent state. It also specifically binds to its receptor SecA. This Coxiella burnetii (strain CbuG_Q212) (Coxiella burnetii (strain Q212)) protein is Protein-export protein SecB.